Here is a 336-residue protein sequence, read N- to C-terminus: Phospho-N-acetylmuramoyl-pentapeptide-transferase (336 aa).

The next 10 helical transmembrane spans lie at 3–23, 53–73, 78–98, 118–138, 143–163, 174–194, 200–220, 226–246, 251–271, and 316–336; these read LTLI…PYFI, GGTV…LFSI, SLAL…IGFL, LALQ…PSGI, VFGY…FWVV, GIDG…GVIA, FDVL…FCFN, VFMG…ISIA, WTLL…MLQV, and AFLW…LYVF.

It belongs to the glycosyltransferase 4 family. MraY subfamily. Mg(2+) serves as cofactor.

The protein resides in the cell membrane. It catalyses the reaction UDP-N-acetyl-alpha-D-muramoyl-L-alanyl-gamma-D-glutamyl-L-lysyl-D-alanyl-D-alanine + di-trans,octa-cis-undecaprenyl phosphate = Mur2Ac(oyl-L-Ala-gamma-D-Glu-L-Lys-D-Ala-D-Ala)-di-trans,octa-cis-undecaprenyl diphosphate + UMP. It participates in cell wall biogenesis; peptidoglycan biosynthesis. Catalyzes the initial step of the lipid cycle reactions in the biosynthesis of the cell wall peptidoglycan: transfers peptidoglycan precursor phospho-MurNAc-pentapeptide from UDP-MurNAc-pentapeptide onto the lipid carrier undecaprenyl phosphate, yielding undecaprenyl-pyrophosphoryl-MurNAc-pentapeptide, known as lipid I. The chain is Phospho-N-acetylmuramoyl-pentapeptide-transferase from Streptococcus pyogenes serotype M1.